The following is a 292-amino-acid chain: Elongation factor Ts (292 aa).

Positions Thr-80 to Val-83 are involved in Mg(2+) ion dislocation from EF-Tu.

It belongs to the EF-Ts family.

It is found in the cytoplasm. In terms of biological role, associates with the EF-Tu.GDP complex and induces the exchange of GDP to GTP. It remains bound to the aminoacyl-tRNA.EF-Tu.GTP complex up to the GTP hydrolysis stage on the ribosome. This is Elongation factor Ts from Cupriavidus pinatubonensis (strain JMP 134 / LMG 1197) (Cupriavidus necator (strain JMP 134)).